The following is a 524-amino-acid chain: Cytochrome P450 52A6 (524 aa).

A helical membrane pass occupies residues 17–34 (WYTVITLAALVFLISSNI). Cys472 is a binding site for heme.

Belongs to the cytochrome P450 family. It depends on heme as a cofactor.

The protein resides in the membrane. In terms of biological role, together with an NADPH cytochrome P450 the enzyme system catalyzes the terminal hydroxylation as the first step in the assimilation of alkanes and fatty acids. Preferentially hydroxylates hexadecane. The protein is Cytochrome P450 52A6 (CYP52A6) of Candida tropicalis (Yeast).